The primary structure comprises 136 residues: Acyl-CoA thioesterase YbgC (136 aa).

Asp18 is an active-site residue.

Belongs to the 4-hydroxybenzoyl-CoA thioesterase family.

Functionally, displays acyl-CoA thioesterase activity with short chain aliphatic acyl-CoA thioesters, such as propionyl-CoA and butyryl-CoA. Enzyme activity is relatively low, suggesting that the acyl-CoA thioesters used in the assays are not the physiological substrates. Has no detectable activity with 4-hydroxybenzoyl-CoA, lauroyl-CoA (C12:0), arachidoyl-CoA (C20:0) and arachidonoyl-CoA (C20:4). The chain is Acyl-CoA thioesterase YbgC (ybgC) from Haemophilus influenzae (strain ATCC 51907 / DSM 11121 / KW20 / Rd).